Reading from the N-terminus, the 435-residue chain is Ornithine decarboxylase (435 aa).

Lysine 98 carries the post-translational modification N6-(pyridoxal phosphate)lysine. Pyridoxal 5'-phosphate contacts are provided by residues serine 230, glycine 268, and 301-304; that span reads EPGR. 344–345 serves as a coordination point for substrate; it reads YD. The active-site Proton donor; shared with dimeric partner is the cysteine 380. Position 381 (aspartate 381) interacts with substrate. Pyridoxal 5'-phosphate is bound at residue tyrosine 409.

This sequence belongs to the Orn/Lys/Arg decarboxylase class-II family. As to quaternary structure, homodimer. Only the dimer is catalytically active, as the active sites are constructed of residues from both monomers. Pyridoxal 5'-phosphate serves as cofactor.

The enzyme catalyses L-ornithine + H(+) = putrescine + CO2. Its pathway is amine and polyamine biosynthesis; putrescine biosynthesis via L-ornithine pathway; putrescine from L-ornithine: step 1/1. Its activity is regulated as follows. Inhibited by antizyme (AZ) in response to polyamine levels. AZ inhibits the assembly of the functional homodimer by binding to ODC monomers and targeting them for ubiquitin-independent proteolytic destruction by the 26S proteasome. Its function is as follows. Catalyzes the first and rate-limiting step of polyamine biosynthesis that converts ornithine into putrescine, which is the precursor for the polyamines, spermidine and spermine. Polyamines are essential for cell proliferation and are implicated in cellular processes, ranging from DNA replication to apoptosis. The sequence is that of Ornithine decarboxylase (ODC) from Capsicum annuum (Capsicum pepper).